A 405-amino-acid polypeptide reads, in one-letter code: Na(+)-translocating NADH-quinone reductase subunit F (405 aa).

Residues 3 to 23 (IILGIVMFTVIVLVLALMILF) form a helical membrane-spanning segment. One can recognise a 2Fe-2S ferredoxin-type domain in the interval 32–124 (GDITIKVNGE…DMDIEVPEEV (93 aa)). Positions 67, 73, 76, and 108 each coordinate [2Fe-2S] cluster. Residues 127 to 267 (VKKWECTVIS…SGPFGEFFAK (141 aa)) form the FAD-binding FR-type domain.

Belongs to the NqrF family. Composed of six subunits; NqrA, NqrB, NqrC, NqrD, NqrE and NqrF. It depends on [2Fe-2S] cluster as a cofactor. FAD serves as cofactor.

Its subcellular location is the cell inner membrane. It catalyses the reaction a ubiquinone + n Na(+)(in) + NADH + H(+) = a ubiquinol + n Na(+)(out) + NAD(+). NQR complex catalyzes the reduction of ubiquinone-1 to ubiquinol by two successive reactions, coupled with the transport of Na(+) ions from the cytoplasm to the periplasm. The first step is catalyzed by NqrF, which accepts electrons from NADH and reduces ubiquinone-1 to ubisemiquinone by a one-electron transfer pathway. This Neisseria meningitidis serogroup C / serotype 2a (strain ATCC 700532 / DSM 15464 / FAM18) protein is Na(+)-translocating NADH-quinone reductase subunit F.